The sequence spans 207 residues: Large ribosomal subunit protein uL4 (207 aa).

The tract at residues 44–78 (LRQGTHKTKTRSEVRGGGRKPWRQKGTGRARQGSI) is disordered. Positions 60-71 (GGRKPWRQKGTG) are enriched in basic residues.

It belongs to the universal ribosomal protein uL4 family. In terms of assembly, part of the 50S ribosomal subunit.

Functionally, one of the primary rRNA binding proteins, this protein initially binds near the 5'-end of the 23S rRNA. It is important during the early stages of 50S assembly. It makes multiple contacts with different domains of the 23S rRNA in the assembled 50S subunit and ribosome. Forms part of the polypeptide exit tunnel. The chain is Large ribosomal subunit protein uL4 from Halalkalibacterium halodurans (strain ATCC BAA-125 / DSM 18197 / FERM 7344 / JCM 9153 / C-125) (Bacillus halodurans).